The sequence spans 520 residues: Alpha-1B adrenergic receptor (520 aa).

The Extracellular portion of the chain corresponds to 1–45; that stretch reads MNPDLDTGHNTSAPAHWGELKNANFTGPNQTSSNSTLPQLDITRA. Asn-10, Asn-24, Asn-29, and Asn-34 each carry an N-linked (GlcNAc...) asparagine glycan. Residues 46–70 form a helical membrane-spanning segment; sequence ISVGLVLGAFILFAIVGNILVILSV. Topologically, residues 71–83 are cytoplasmic; it reads ACNRHLRTPTNYF. Residues 84 to 105 traverse the membrane as a helical segment; it reads IVNLAMADLLLSFTVLPFSAAL. Residues 106 to 115 are Extracellular-facing; it reads EVLGYWVLGR. The helical transmembrane segment at 116–141 threads the bilayer; sequence IFCDIWAAVDVLCCTASILSLCAISI. Cys-118 and Cys-195 form a disulfide bridge. Residues 142 to 161 are Cytoplasmic-facing; that stretch reads DRYIGVRYSLQYPTLVTRRK. Residues 162–184 form a helical membrane-spanning segment; sequence AILALLSVWVLSTVISIGPLLGW. At 185 to 201 the chain is on the extracellular side; the sequence is KEPAPNDDKECGVTEEP. Residues 202–224 form a helical membrane-spanning segment; sequence FYALFSSLGSFYIPLAVILVMYC. Topologically, residues 225–295 are cytoplasmic; that stretch reads RVYIVAKRTT…FSREKKAAKT (71 aa). The residue at position 264 (Thr-264) is a Phosphothreonine. The helical transmembrane segment at 296–319 threads the bilayer; that stretch reads LGIVVGMFILCWLPFFIALPLGSL. Residues 320–326 are Extracellular-facing; the sequence is FSTLKPP. Residues 327-351 traverse the membrane as a helical segment; it reads DAVFKVVFWLGYFNSCLNPIIYPCS. Residues 352 to 520 lie on the Cytoplasmic side of the membrane; sequence SKEFKRAFVR…SNMPLAPGQF (169 aa). Cys-365 carries the S-palmitoyl cysteine lipid modification. The short motif at 368 to 380 is the Nuclear localization signal element; sequence RGRGRRRRRRRRR. 2 disordered regions span residues 394-432 and 479-520; these read GGSL…GYLG and LTEP…PGQF.

This sequence belongs to the G-protein coupled receptor 1 family. Adrenergic receptor subfamily. ADRA1B sub-subfamily. As to quaternary structure, homo- and heterooligomer. Heterooligomerizes with ADRA1B homooligomers in cardiac myocytes. Interacts with CAVIN4.

Its subcellular location is the nucleus membrane. It localises to the cell membrane. It is found in the cytoplasm. The protein resides in the membrane. The protein localises to the caveola. Functionally, this alpha-adrenergic receptor mediates its action by association with G proteins that activate a phosphatidylinositol-calcium second messenger system. Its effect is mediated by G(q) and G(11) proteins. Nuclear ADRA1A-ADRA1B heterooligomers regulate phenylephrine (PE)-stimulated ERK signaling in cardiac myocytes. This Homo sapiens (Human) protein is Alpha-1B adrenergic receptor (ADRA1B).